Reading from the N-terminus, the 284-residue chain is Ribosomal RNA small subunit methyltransferase A (284 aa).

S-adenosyl-L-methionine-binding residues include Asn27, Leu29, Gly54, Glu75, Asp100, and Asn125.

This sequence belongs to the class I-like SAM-binding methyltransferase superfamily. rRNA adenine N(6)-methyltransferase family. RsmA subfamily.

The protein resides in the cytoplasm. It catalyses the reaction adenosine(1518)/adenosine(1519) in 16S rRNA + 4 S-adenosyl-L-methionine = N(6)-dimethyladenosine(1518)/N(6)-dimethyladenosine(1519) in 16S rRNA + 4 S-adenosyl-L-homocysteine + 4 H(+). Functionally, specifically dimethylates two adjacent adenosines (A1518 and A1519) in the loop of a conserved hairpin near the 3'-end of 16S rRNA in the 30S particle. May play a critical role in biogenesis of 30S subunits. The chain is Ribosomal RNA small subunit methyltransferase A from Protochlamydia amoebophila (strain UWE25).